Reading from the N-terminus, the 271-residue chain is Ribosomal RNA small subunit methyltransferase A (271 aa).

6 residues coordinate S-adenosyl-L-methionine: Asn-18, Leu-20, Gly-45, Glu-66, Asp-91, and Asn-112.

The protein belongs to the class I-like SAM-binding methyltransferase superfamily. rRNA adenine N(6)-methyltransferase family. RsmA subfamily.

The protein localises to the cytoplasm. It carries out the reaction adenosine(1518)/adenosine(1519) in 16S rRNA + 4 S-adenosyl-L-methionine = N(6)-dimethyladenosine(1518)/N(6)-dimethyladenosine(1519) in 16S rRNA + 4 S-adenosyl-L-homocysteine + 4 H(+). Its function is as follows. Specifically dimethylates two adjacent adenosines (A1518 and A1519) in the loop of a conserved hairpin near the 3'-end of 16S rRNA in the 30S particle. May play a critical role in biogenesis of 30S subunits. The polypeptide is Ribosomal RNA small subunit methyltransferase A (Vibrio cholerae serotype O1 (strain ATCC 39315 / El Tor Inaba N16961)).